We begin with the raw amino-acid sequence, 562 residues long: Cell division protein FtsZ (562 aa).

Residues 23–27 (GAGGN), 110–112 (GTG), glutamate 141, arginine 145, and aspartate 189 contribute to the GTP site. A compositionally biased stretch (low complexity) spans 404–413 (PAAARPAQQP). Disordered regions lie at residues 404–428 (PAAARPAQQPMAETFRPDPQLRLDP) and 462–562 (ETAQ…RQAN). Positions 418-428 (FRPDPQLRLDP) are enriched in basic and acidic residues. Composition is skewed to low complexity over residues 464–486 (AQAAPQPQRQPEIQRQQAPQPQR) and 500–510 (GLLRRPAAAQP).

This sequence belongs to the FtsZ family. As to quaternary structure, homodimer. Polymerizes to form a dynamic ring structure in a strictly GTP-dependent manner. Interacts directly with several other division proteins. Interacts with FtsZ-like protein (also called FtsZm).

It is found in the cytoplasm. Its function is as follows. Essential cell division protein that forms a contractile ring structure (Z ring) at the future cell division site. The regulation of the ring assembly controls the timing and the location of cell division. One of the functions of the FtsZ ring is to recruit other cell division proteins to the septum to produce a new cell wall between the dividing cells. Binds GTP and shows GTPase activity. Mild overexpression impairs cell division, leading to very elongated cells. Isolated protein forms filaments and bundles in the presence of GTP. The polypeptide is Cell division protein FtsZ (Magnetospirillum gryphiswaldense (strain DSM 6361 / JCM 21280 / NBRC 15271 / MSR-1)).